Consider the following 302-residue polypeptide: Vacuolar protein sorting-associated protein 26A (302 aa).

The protein belongs to the VPS26 family. As to quaternary structure, component of the retromer complex which consists of VPS29 (MAG1), VPS26 (VPS26A or VPS26B), VPS35 (VPS35A or VPS35B or VPS35C), VPS5/17 (SNX1 or SNX2A or SNX2B). Component of a retromer subcomplex consisting of VPS29 (MAG1), VPS26 (VPS26A or VPS26B), VPS35 (VPS35A or VPS35B or VPS35C).

It localises to the cytoplasm. The protein resides in the endosome membrane. The protein localises to the prevacuolar compartment membrane. It is found in the golgi apparatus. Its subcellular location is the trans-Golgi network membrane. Plays a role in vesicular protein sorting. Component of the membrane-associated retromer complex which is essential in endosome-to-Golgi retrograde transport. The VPS29-VPS26-VPS35 subcomplex may be involved in recycling of specific cargos from endosome to the plasma membrane. The polypeptide is Vacuolar protein sorting-associated protein 26A (VPS26A) (Arabidopsis thaliana (Mouse-ear cress)).